Reading from the N-terminus, the 285-residue chain is Urease accessory protein UreD (285 aa).

Belongs to the UreD family. As to quaternary structure, ureD, UreF and UreG form a complex that acts as a GTP-hydrolysis-dependent molecular chaperone, activating the urease apoprotein by helping to assemble the nickel containing metallocenter of UreC. The UreE protein probably delivers the nickel.

It is found in the cytoplasm. Functionally, required for maturation of urease via the functional incorporation of the urease nickel metallocenter. The protein is Urease accessory protein UreD of Azoarcus sp. (strain BH72).